Consider the following 182-residue polypeptide: Heat shock protein beta-2 (182 aa).

In terms of domain architecture, sHSP spans 55 to 163 (PAGEGSRAGA…DTEVNEVYIS (109 aa)).

This sequence belongs to the small heat shock protein (HSP20) family. Interacts with DMPK; may enhance its kinase activity. Expressed preferentially in skeletal muscle and heart but not in the lens.

The protein localises to the cytoplasm. The protein resides in the nucleus. May regulate the kinase DMPK. In Homo sapiens (Human), this protein is Heat shock protein beta-2 (HSPB2).